Reading from the N-terminus, the 475-residue chain is Ubiquitin carboxyl-terminal hydrolase calypso (475 aa).

A UCH catalytic domain is found at 44–275 (GWLELESDPG…IRFNLMAVVP (232 aa)). Cysteine 130 acts as the Nucleophile in catalysis. Histidine 212 functions as the Proton donor in the catalytic mechanism. The stretch at 333–360 (AKDLQLLLKNLDTEIAINEQNLADENDR) forms a coiled coil. The ULD domain maps to 374 to 402 (NYDKFICTFLSMLAHQGVLGELVSQHLLP). The tract at residues 404–475 (KKVSGQSAAN…KGRNKCRKRK (72 aa)) is positively charged C-terminal tail required for binding nucleosomes. Residues 411-475 (AANRISKQNS…KGRNKCRKRK (65 aa)) form a disordered region. Residues 419-460 (NSAASSAGANAGAAAGVTPKSQQQQQQPQTAASKNGKSPGKT) are compositionally biased toward low complexity. The segment covering 461–475 (PGRRRKGRNKCRKRK) has biased composition (basic residues).

Belongs to the peptidase C12 family. BAP1 subfamily. As to quaternary structure, catalytic component of the polycomb repressive deubiquitinase (PR-DUB) complex, at least composed of caly/calypso, Asx and sba (MBD5/6 homolog). The PR-DUB complex associates with nucleosomes to mediate deubiquitination of histone H2AK118ub1 substrates; the association requires the positively charged C-terminal tail of caly, probably due to direct binding of DNA. Interacts (via ULD domain) with Asx (via DEUBAD domain); the interaction produces a stable heterodimer with a composite binding site for ubiquitin. Homodimerizes (via coiled-coil hinge-region between the UCH and ULD domains) to mediate assembly of 2 copies of the caly-Asx heterodimer into a bisymmetric tetramer; dimerization enhances PR-DUB association with nucleosomes.

It is found in the nucleus. It catalyses the reaction Thiol-dependent hydrolysis of ester, thioester, amide, peptide and isopeptide bonds formed by the C-terminal Gly of ubiquitin (a 76-residue protein attached to proteins as an intracellular targeting signal).. Catalytic component of the polycomb repressive deubiquitinase (PR-DUB) complex, a complex that specifically mediates deubiquitination of histone H2A monoubiquitinated at 'Lys-119' (H2AK118ub1). Mediates bisymmetric organization of the PR-DUB complex and is involved in association with nucleosomes to mediate deubiquitination. Does not deubiquitinate monoubiquitinated histone H2B. Required to maintain the transcriptionally repressive state of homeotic genes throughout development. The PR-DUB complex has weak or no activity toward 'Lys-48'- and 'Lys-63'-linked polyubiquitin chains. Polycomb group (PcG) protein. In Drosophila persimilis (Fruit fly), this protein is Ubiquitin carboxyl-terminal hydrolase calypso.